The following is a 222-amino-acid chain: 7-cyano-7-deazaguanine synthase (222 aa).

ATP is bound at residue 8 to 18; that stretch reads LSGGMDSTTAA. Residues Cys-187, Cys-195, Cys-198, and Cys-201 each coordinate Zn(2+).

The protein belongs to the QueC family. Zn(2+) serves as cofactor.

The enzyme catalyses 7-carboxy-7-deazaguanine + NH4(+) + ATP = 7-cyano-7-deazaguanine + ADP + phosphate + H2O + H(+). The protein operates within purine metabolism; 7-cyano-7-deazaguanine biosynthesis. Catalyzes the ATP-dependent conversion of 7-carboxy-7-deazaguanine (CDG) to 7-cyano-7-deazaguanine (preQ(0)). The polypeptide is 7-cyano-7-deazaguanine synthase (Nautilia profundicola (strain ATCC BAA-1463 / DSM 18972 / AmH)).